A 64-amino-acid chain; its full sequence is Large ribosomal subunit protein bL35 (64 aa).

This sequence belongs to the bacterial ribosomal protein bL35 family.

This Mycoplasmopsis pulmonis (strain UAB CTIP) (Mycoplasma pulmonis) protein is Large ribosomal subunit protein bL35.